A 439-amino-acid chain; its full sequence is UDP-N-acetylglucosamine--N-acetylmuramyl-(pentapeptide) pyrophosphoryl-undecaprenol N-acetylglucosamine transferase (439 aa).

Residues 25–27 (TGG), R218, S248, and Q362 contribute to the UDP-N-acetyl-alpha-D-glucosamine site.

Belongs to the glycosyltransferase 28 family. MurG subfamily.

It is found in the cell membrane. It catalyses the reaction di-trans,octa-cis-undecaprenyl diphospho-N-acetyl-alpha-D-muramoyl-L-alanyl-D-glutamyl-meso-2,6-diaminopimeloyl-D-alanyl-D-alanine + UDP-N-acetyl-alpha-D-glucosamine = di-trans,octa-cis-undecaprenyl diphospho-[N-acetyl-alpha-D-glucosaminyl-(1-&gt;4)]-N-acetyl-alpha-D-muramoyl-L-alanyl-D-glutamyl-meso-2,6-diaminopimeloyl-D-alanyl-D-alanine + UDP + H(+). Its pathway is cell wall biogenesis; peptidoglycan biosynthesis. Functionally, cell wall formation. Catalyzes the transfer of a GlcNAc subunit on undecaprenyl-pyrophosphoryl-MurNAc-pentapeptide (lipid intermediate I) to form undecaprenyl-pyrophosphoryl-MurNAc-(pentapeptide)GlcNAc (lipid intermediate II). In Roseiflexus sp. (strain RS-1), this protein is UDP-N-acetylglucosamine--N-acetylmuramyl-(pentapeptide) pyrophosphoryl-undecaprenol N-acetylglucosamine transferase.